The primary structure comprises 122 residues: Large ribosomal subunit protein uL14 (122 aa).

Belongs to the universal ribosomal protein uL14 family. Part of the 50S ribosomal subunit. Forms a cluster with proteins L3 and L19. In the 70S ribosome, L14 and L19 interact and together make contacts with the 16S rRNA in bridges B5 and B8.

Its function is as follows. Binds to 23S rRNA. Forms part of two intersubunit bridges in the 70S ribosome. In Polynucleobacter asymbioticus (strain DSM 18221 / CIP 109841 / QLW-P1DMWA-1) (Polynucleobacter necessarius subsp. asymbioticus), this protein is Large ribosomal subunit protein uL14.